The chain runs to 335 residues: Holliday junction branch migration complex subunit RuvB (335 aa).

The large ATPase domain (RuvB-L) stretch occupies residues Ala-2 to Tyr-184. ATP-binding positions include Leu-23, Arg-24, Gly-65, Lys-68, Thr-69, Thr-70, Glu-131–Phe-133, Arg-174, Tyr-184, and Arg-221. Position 69 (Thr-69) interacts with Mg(2+). The tract at residues Thr-185–Gln-255 is small ATPAse domain (RuvB-S). A head domain (RuvB-H) region spans residues Ile-258–Lys-335. DNA is bound by residues Arg-313 and Arg-318.

The protein belongs to the RuvB family. As to quaternary structure, homohexamer. Forms an RuvA(8)-RuvB(12)-Holliday junction (HJ) complex. HJ DNA is sandwiched between 2 RuvA tetramers; dsDNA enters through RuvA and exits via RuvB. An RuvB hexamer assembles on each DNA strand where it exits the tetramer. Each RuvB hexamer is contacted by two RuvA subunits (via domain III) on 2 adjacent RuvB subunits; this complex drives branch migration. In the full resolvosome a probable DNA-RuvA(4)-RuvB(12)-RuvC(2) complex forms which resolves the HJ.

It is found in the cytoplasm. It catalyses the reaction ATP + H2O = ADP + phosphate + H(+). Its function is as follows. The RuvA-RuvB-RuvC complex processes Holliday junction (HJ) DNA during genetic recombination and DNA repair, while the RuvA-RuvB complex plays an important role in the rescue of blocked DNA replication forks via replication fork reversal (RFR). RuvA specifically binds to HJ cruciform DNA, conferring on it an open structure. The RuvB hexamer acts as an ATP-dependent pump, pulling dsDNA into and through the RuvAB complex. RuvB forms 2 homohexamers on either side of HJ DNA bound by 1 or 2 RuvA tetramers; 4 subunits per hexamer contact DNA at a time. Coordinated motions by a converter formed by DNA-disengaged RuvB subunits stimulates ATP hydrolysis and nucleotide exchange. Immobilization of the converter enables RuvB to convert the ATP-contained energy into a lever motion, pulling 2 nucleotides of DNA out of the RuvA tetramer per ATP hydrolyzed, thus driving DNA branch migration. The RuvB motors rotate together with the DNA substrate, which together with the progressing nucleotide cycle form the mechanistic basis for DNA recombination by continuous HJ branch migration. Branch migration allows RuvC to scan DNA until it finds its consensus sequence, where it cleaves and resolves cruciform DNA. The polypeptide is Holliday junction branch migration complex subunit RuvB (Latilactobacillus sakei subsp. sakei (strain 23K) (Lactobacillus sakei subsp. sakei)).